The sequence spans 212 residues: Large ribosomal subunit protein uL3 (212 aa).

The segment at 117-142 (TSKGKGFQGNIKRHNQSRGPMTHGSR) is disordered.

It belongs to the universal ribosomal protein uL3 family. In terms of assembly, part of the 50S ribosomal subunit. Forms a cluster with proteins L14 and L19.

Functionally, one of the primary rRNA binding proteins, it binds directly near the 3'-end of the 23S rRNA, where it nucleates assembly of the 50S subunit. The sequence is that of Large ribosomal subunit protein uL3 from Acholeplasma laidlawii (strain PG-8A).